Reading from the N-terminus, the 402-residue chain is Apolipoprotein L3 (402 aa).

It belongs to the apolipoprotein L family. As to expression, widely expressed; the highest levels are in prostate, lung and placenta; also detected in kidney, bone marrow, spleen, thymus, spinal cord, adrenal gland, salivary gland, trachea and mammary gland; levels are low in brain, heart, fetal liver, pancreas and testis.

The protein localises to the cytoplasm. May affect the movement of lipids in the cytoplasm or allow the binding of lipids to organelles. The protein is Apolipoprotein L3 (APOL3) of Homo sapiens (Human).